Reading from the N-terminus, the 351-residue chain is MLLILLSVALLALSSAQSLNEDVSQEESPSVISGKPEGRRPQGGNQPQRTPPPPGKPEGRPPQGGNQSQGPPPRPGKPEGPPPQGGNQSQGPPPRPGKPEGQPPQGGNQSQGPPPRPGKPEGPPPQGGNQSQGPPPRPGKPEGPPPQGGNQSQGPPPRPGKPEGPPPQGGNQSQGPPPHPGKPEGPPPQGGNQSQGPPPRPGKPEGPPPQGGNQSQGPPPRPGKPEGPPPQGGNKPQGPPPRPGKPEGPPPQGGNQSQGPPPRPGKPEGPPSQGGNKPQGPPPHPGKPQGPPPQEGNKPQRPPPPGRPQGPPPPGGNPQQPLPPPAGKPQGPPPPPQGGRPHRPPQGQPPQ.

Positions Met1–Ala16 are cleaved as a signal peptide. Pyrrolidone carboxylic acid is present on Gln17. Residues Gln17–Gln351 are disordered. Over residues Asn20–Val31 the composition is skewed to polar residues. The residue at position 24 (Ser24) is a Phosphoserine. A run of 12 repeats spans residues Pro53–Pro73, Arg74–Pro94, Arg95–Pro115, Arg116–Pro136, Arg137–Pro157, Arg158–Pro178, His179–Pro199, Arg200–Pro220, Arg221–Pro241, Arg242–Pro261, Arg263–Pro283, and His284–Pro304. Residues Pro53 to Pro304 are 12 X 21 AA tandem repeats of [RHP]-P-G-K-P-[EQ]-G-[PQS]-P-[PS]-Q-[GE]-G-N-[QK]-[SP]-[QR]-[GR]-P-P-P. Asn66 carries N-linked (GlcNAc...) asparagine glycosylation. Residues Gly70 to Gln84 are compositionally biased toward pro residues. The N-linked (GlcNAc...) asparagine glycan is linked to Asn87. A glycan (O-linked (Hex) serine) is linked at Ser89. Low complexity predominate over residues Pro99–Gln111. N-linked (GlcNAc...) asparagine glycosylation is present at Asn108. Over residues Gly112 to Gln126 the composition is skewed to pro residues. The N-linked (GlcNAc...) asparagine glycan is linked to Asn129. A compositionally biased stretch (pro residues) spans Gly133–Gln147. The N-linked (GlcNAc...) asparagine glycan is linked to Asn150. Pro residues-rich tracts occupy residues Gly154 to Gln168 and Gly175 to Gln189. Asn192 carries N-linked (GlcNAc...) asparagine glycosylation. Residues Gly196–Gln210 show a composition bias toward pro residues. N-linked (GlcNAc...) asparagine glycosylation is found at Asn213 and Asn234. 3 stretches are compositionally biased toward pro residues: residues Gly217–Gln252, Gly259–Pro270, and Gln279–Gln351. N-linked (Hex) asparagine; atypical glycosylation is present at Asn297.

N- and O-glycosylated; contains about 50% carbohydrate. This is composed of highly fucosylated N-linked saccharides, the major structure is a biantennary asialosaccharide containing 2 fucose residues on one antenna and an unsubstituted terminal lactosamine sequence on the other. The Gram-negative bacterium F.nucleatum binds to carbohydrates containing unsubstituted GalBeta1,4GlcNAc residues. N-glycosylation on Asn-87 is prevalent in head and neck cancer patients. In terms of processing, proteolytically cleaved at the tripeptide Xaa-Pro-Gln, where Xaa in the P(3) position is mostly lysine. The endoprotease may be of microbial origin. Besides on the N-terminal of mature PRB3, pyroglutamate formation found on at least Gln-67, Gln-88, Gln-256 and Gln-337.

The protein resides in the secreted. Acts as a receptor for the Gram-negative bacterium F.nucleatum. The protein is Basic salivary proline-rich protein 3 (PRB3) of Homo sapiens (Human).